A 244-amino-acid polypeptide reads, in one-letter code: Transcriptional activator protein FnrA (244 aa).

In terms of domain architecture, HTH crp-type spans 159–232 (KTADERIATF…GKEVRILDSI (74 aa)). Positions 192 to 211 (RNEIGNYLGLAVETVSRVFT) form a DNA-binding region, H-T-H motif.

Transcriptional regulator of arginine deiminase. The polypeptide is Transcriptional activator protein FnrA (fnrA) (Stutzerimonas stutzeri (Pseudomonas stutzeri)).